We begin with the raw amino-acid sequence, 579 residues long: 2-isopropylmalate synthase (579 aa).

The region spanning 33-308 (PRWLSTDLRD…DPGIDFSDIN (276 aa)) is the Pyruvate carboxyltransferase domain. Residues Asp-42, His-247, His-249, and Asn-283 each coordinate Mg(2+). The segment at 450-579 (SSDLPVPLAS…IVAPLVAAGR (130 aa)) is regulatory domain.

Belongs to the alpha-IPM synthase/homocitrate synthase family. LeuA type 2 subfamily. Homodimer. Mg(2+) is required as a cofactor.

Its subcellular location is the cytoplasm. It catalyses the reaction 3-methyl-2-oxobutanoate + acetyl-CoA + H2O = (2S)-2-isopropylmalate + CoA + H(+). It functions in the pathway amino-acid biosynthesis; L-leucine biosynthesis; L-leucine from 3-methyl-2-oxobutanoate: step 1/4. Functionally, catalyzes the condensation of the acetyl group of acetyl-CoA with 3-methyl-2-oxobutanoate (2-ketoisovalerate) to form 3-carboxy-3-hydroxy-4-methylpentanoate (2-isopropylmalate). This Streptosporangium roseum (strain ATCC 12428 / DSM 43021 / JCM 3005 / KCTC 9067 / NCIMB 10171 / NRRL 2505 / NI 9100) protein is 2-isopropylmalate synthase.